Reading from the N-terminus, the 337-residue chain is MHLSLLVPFLFWITGCCTAEDPVTGPEEVSGQEQGSLTVQCRYTSGWKDYKKYWCQGVPQRSCKTLVETDASEQLVKKNRVSIRDNQRDFIFTVTMEDLRMSDAGIYWCGITKGGLDPMFKVTVNIGPAIQVPITVPTMPPITSTTTIFTVTTTVKETSMFPTLTSYYSDNGHGGGDSGGGEDGVGDGFLDLSVLLPVISAVLLLLLLVASLFAWRMVRRQKKAAGPPSEQAQSLEGDLCYADLSLKQPRTSPGSSWKKGSSMSSSGKDHQEEVEYVTMAPFPREEVSYAALTLAGLGQEPTYGNTGCPITHVPRTGLEEETTEYSSIRRPLPAAMP.

A signal peptide spans 1-19 (MHLSLLVPFLFWITGCCTA). The region spanning 20 to 125 (EDPVTGPEEV…LDPMFKVTVN (106 aa)) is the Ig-like V-type domain. Topologically, residues 20–193 (EDPVTGPEEV…GVGDGFLDLS (174 aa)) are extracellular. Residues 39-45 (VQCRYTS) form a plays an important role in murine norovirus (MNV) binding region. Disulfide bonds link Cys41-Cys109 and Cys55-Cys63. A helical membrane pass occupies residues 194 to 214 (VLLPVISAVLLLLLLVASLFA). The Cytoplasmic portion of the chain corresponds to 215 to 337 (WRMVRRQKKA…IRRPLPAAMP (123 aa)). Disordered regions lie at residues 248–270 (QPRT…GKDH) and 318–337 (LEEE…AAMP). Over residues 252 to 266 (SPGSSWKKGSSMSSS) the composition is skewed to low complexity.

The protein belongs to the CD300 family. As to quaternary structure, interacts with PTPN6/SHP-1 in a tyrosine phosphorylation dependent manner. Interacts with IL4R. Phosphorylated on tyrosine. As to expression, expressed in myeloid cells. Present on the surface of macrophages (at protein level). Highly expressed by alveolar, splenic macrophages and bone marrow-derived dendritic cells. Expression is increased following aeroallergen challenge in macrophages, mast cells, and eosinophils.

It is found in the cell membrane. In terms of biological role, acts as an inhibitory receptor for myeloid cells and mast cells. Positively regulates the phagocytosis of apoptotic cells (efferocytosis) via phosphatidylserine (PS) recognition; recognizes and binds PS as a ligand which is expressed on the surface of apoptotic cells. Plays an important role in the maintenance of immune homeostasis, by promoting macrophage-mediated efferocytosis and by inhibiting dendritic cell-mediated efferocytosis. Negatively regulates Fc epsilon receptor-dependent mast cell activation and allergic responses via binding to ceramide which acts as a ligand. May act as a coreceptor for interleukin 4 (IL-4). Associates with and regulates IL-4 receptor alpha-mediated responses by augmenting IL-4- and IL-13-induced signaling. Negatively regulates the Toll-like receptor (TLR) signaling mediated by MYD88 and TRIF through activation of PTPN6/SHP-1 and PTPN11/SHP-2. Inhibits osteoclast formation. Induces macrophage cell death upon engagement. Functionally, (Microbial infection) Acts as a functional receptor for murine norovirus (MNV). Mediates binding to the cell surface and is both necessary and sufficient for viral entry and replication. This interaction requires Mg(2+) and Ca(2+) and is enhanced by bile acids. Primary determinant of MNV species tropism and is sufficient to render cells permissive to infection by MNV. Can render nonmurine mammalian cells susceptible to MNV infection. The sequence is that of CMRF35-like molecule 1 (Cd300lf) from Mus musculus (Mouse).